The primary structure comprises 338 residues: POU domain, class 4, transcription factor 3 (338 aa).

Residues 56 to 65 (RAEALAAVDI) carry the POU-IV box motif. The region spanning 179–256 (DVESDPRELE…VLQAWLEEAE (78 aa)) is the POU-specific domain. A DNA-binding region (homeobox) is located at residues 274-333 (RKRKRTSIAAPEKRSLEAYFAIQPRPSSEKIAAIAEKLDLKKNVVRVWFCNQRQKQKRMK).

This sequence belongs to the POU transcription factor family. Class-4 subfamily. Interacts with ISL1. Brain. Seems to be specific to the retina.

It is found in the nucleus. The protein resides in the cytoplasm. In terms of biological role, acts as a transcriptional activator. Acts by binding to sequences related to the consensus octamer motif 5'-ATGCAAAT-3' in the regulatory regions of its target genes. Involved in the auditory system development, required for terminal differentiation of hair cells in the inner ear. This Homo sapiens (Human) protein is POU domain, class 4, transcription factor 3 (POU4F3).